Here is a 207-residue protein sequence, read N- to C-terminus: CASP-like protein 1D1 (207 aa).

Over 1–40 the chain is Cytoplasmic; it reads MATVDGTTAPSSGGKTATVALESGGGRYGGPAPAKCSGAN. Residues 41–61 traverse the membrane as a helical segment; that stretch reads LALRALLFAVSLSALVVLVTA. Residues 62–89 are Extracellular-facing; that stretch reads KQTVMVPFVIRPPQFILAPVPAKYTHSP. The chain crosses the membrane as a helical span at residues 90 to 110; sequence ALIYLLAALCATCFYSLITAI. Over 111 to 124 the chain is Cytoplasmic; it reads SSVRLLSSSACSAK. A helical transmembrane segment spans residues 125–145; sequence TLFYLILLDVFYAAVMASATG. At 146-176 the chain is on the extracellular side; that stretch reads TAGAVAWVGLKGNSHTRWNKICNVYGKFCRH. Residues 177-197 form a helical membrane-spanning segment; it reads IGSSTFLALIAAIVLVLLAFL. The Cytoplasmic portion of the chain corresponds to 198-207; that stretch reads NAYSLYRRSR.

Belongs to the Casparian strip membrane proteins (CASP) family. Homodimer and heterodimers.

The protein localises to the cell membrane. This chain is CASP-like protein 1D1, found in Oryza sativa subsp. japonica (Rice).